Reading from the N-terminus, the 202-residue chain is MPSPSRKSRSRSRSRSKSPKRSPAKKARKTPKKPRAAGGAKKPTTLSMIVAAITAMKNRKGSSVQAIRKYILANNKGINTSHLGSAMKLAFAKGLKSGVLVRPKTSAGASGATGSFRVGKAPASPKKAKKAKSPKKKSSKKSKNKSNNAKAKKSPKKKADSNGIRYQAYRYRRPRGGARYPFRYQAYRYRRPRGGPGTQFAL.

Positions 1 to 35 (MPSPSRKSRSRSRSRSKSPKRSPAKKARKTPKKPR) are enriched in basic residues. Disordered regions lie at residues 1-46 (MPSP…PTTL) and 104-202 (KTSA…QFAL). Positions 41-120 (KKPTTLSMIV…GATGSFRVGK (80 aa)) constitute an H15 domain. Residues 126–156 (KKAKKAKSPKKKSSKKSKNKSNNAKAKKSPK) are compositionally biased toward basic residues. Residues 177-187 (GARYPFRYQAY) are compositionally biased toward low complexity.

In terms of processing, OE1 and OE3 are produced by post-translational cleavage of a common precursor. Sperm.

It localises to the nucleus. The protein localises to the chromosome. In terms of biological role, linker histones are implicated in chromatin remodeling and/or transcriptional regulation during spermiogenesis, the process of spermatid maturation into spermatozoa. Protamines substitute for histones in the chromatin of sperm during the haploid phase of spermatogenesis. They compact sperm DNA into a highly condensed, stable and inactive complex. The chain is Sperm-specific H1/protamine-like protein type 1 from Ostrea edulis (Native oyster).